The primary structure comprises 154 residues: Aspartate carbamoyltransferase regulatory chain (154 aa).

4 residues coordinate Zn(2+): C109, C114, C138, and C141.

It belongs to the PyrI family. Contains catalytic and regulatory chains. Zn(2+) is required as a cofactor.

In terms of biological role, involved in allosteric regulation of aspartate carbamoyltransferase. This chain is Aspartate carbamoyltransferase regulatory chain, found in Serratia proteamaculans (strain 568).